Here is a 334-residue protein sequence, read N- to C-terminus: Cytoskeleton protein RodZ (334 aa).

The Cytoplasmic portion of the chain corresponds to 1-111 (MNTEATHDQN…LGKRRKKRDG (111 aa)). In terms of domain architecture, HTH cro/C1-type spans 19-71 (LRNAREQLGLSQQAVAERLCLKVSTVRDIEEDKAPSDLASTFLRGYIRSYARL). A DNA-binding region (H-T-H motif) is located at residues 30–49 (QQAVAERLCLKVSTVRDIEE). A helical; Signal-anchor for type II membrane protein transmembrane segment spans residues 112-132 (WLMSFTWLVLFVVVGLTGAWW). Topologically, residues 133 to 334 (WQNHKAHQEE…TLNAEPTPAQ (202 aa)) are periplasmic. The interval 152-210 (AGLNADKDSGQSVPLDTGAVTSQDTTPAQTAPAPATPVDSTAATQTPAPTAAATQNTVV) is disordered. A compositionally biased stretch (polar residues) spans 161-175 (GQSVPLDTGAVTSQD). Positions 176 to 210 (TTPAQTAPAPATPVDSTAATQTPAPTAAATQNTVV) are enriched in low complexity.

It belongs to the RodZ family.

The protein localises to the cell inner membrane. In terms of biological role, cytoskeletal protein that is involved in cell-shape control through regulation of the length of the long axis. The protein is Cytoskeleton protein RodZ of Salmonella gallinarum (strain 287/91 / NCTC 13346).